The sequence spans 219 residues: Transmembrane emp24 domain-containing protein 10 (219 aa).

A signal peptide spans M1–G31. Residues M1–E142 are required for interaction with STX17. At I32–R185 the chain is on the lumenal side. Residues R41 to S193 form the GOLD domain. The segment at L147–T178 is required for TMED10 and TMED2 cis-Golgi network localization. A dimethylated arginine mark is found at R171 and R176. N179 carries an N-linked (GlcNAc...) asparagine glycan. Residues V186 to F206 traverse the membrane as a helical segment. Positions Q204–E219 are interaction with COPG1. The Cytoplasmic segment spans residues Y207 to E219. The tract at residues Y207 to E219 is interaction with ARF1 and IL1B. The COPII vesicle coat-binding motif lies at F211 to F212. Positions F211 to E219 match the COPI vesicle coat-binding motif.

This sequence belongs to the EMP24/GP25L family. As to quaternary structure, predominantly dimeric and to a lesser extent monomeric in the ER. Monomer and dimer in ERGIC and cis-Golgi network. Forms homooligomer (via GOLD domain); the assembly is promoted by direct binding with leaderless cargos and may form a protein channel that facilitates cargo entry into the ERGIC. Forms heterooligomeric complexes with other members of the p24 family such as TMED2, TMED7 and TMED9. Interacts (via GOLD domain) with TMED2 (via GOLD domain); the complex is required for export of TMED10 from the ER to the cis-Golgi network; the complex is proposed to be involved in cis-Golgi network dynamics and / or biogenesis. Associates with the COPI vesicle coat subunits (coatomer). Tetramerization of the cytoplasmic domain at the Golgi membrane in vitro; the complex is proposed to interact with COPI coatomer and induce budding of the vesicles. Interacts with COPG1; the interaction involves TMED10 homodimer. Interacts with ARF1 (GDP-bound); the interaction probably involves a TMED10 oligomer. Interacts with SEC23A, SEC24B, SEC24C and SEC24D components of the coat protein complex II/COPII, indicative of an association of TMED10 with the COPII vesicle coat. Interacts with CD59. Interacts with MPPE1/PGAP5; the complex might recruit and sort GPI-anchored proteins to the ER-exit site, or the interaction might lead to recycling of PGAP5 between the ER and the Golgi. Interacts with F2LR1/PAR2. Interacts with KDELR2/ERD2; the interaction is disrupted by KDELR2 ligand. Found in a complex composed at least of SURF4, TMED2 and TMED10. Associates with the presenilin-dependent gamma-secretase complex. Interacts with STX17; the interaction is direct. Interacts with IL-1; the interaction is direct. Interacts with RAB21 (active GTP-bound form); the interaction is indirect and regulates TMED10 abundance and localization at the Golgi.

It localises to the endoplasmic reticulum membrane. It is found in the endoplasmic reticulum-Golgi intermediate compartment membrane. The protein resides in the golgi apparatus membrane. The protein localises to the golgi apparatus. Its subcellular location is the cis-Golgi network membrane. It localises to the trans-Golgi network membrane. It is found in the cytoplasmic vesicle. The protein resides in the secretory vesicle membrane. The protein localises to the cell membrane. Its subcellular location is the melanosome. In terms of biological role, cargo receptor involved in protein vesicular trafficking and quality control in the endoplasmic reticulum (ER) and Golgi. The p24 protein family is a group of transmembrane proteins that bind coat protein complex I/COPI and coat protein complex II/COPII involved in vesicular trafficking between the membranes. Acts at the lumenal side for incorporation of secretory cargo molecules into transport vesicles and involved in vesicle coat formation at the cytoplasmic side. Mainly functions in the early secretory pathway and cycles between the ER, ER-Golgi intermediate compartment (ERGIC) and Golgi, mediating cargo transport through COPI and COPII-coated vesicles. In COPII vesicle-mediated anterograde transport, involved in the transport of GPI-anchored proteins by acting together with TMED2 as their cargo receptor; the function specifically implies SEC24C and SEC24D of the COPII vesicle coat and lipid raft-like microdomains of the ER. Recognizes GPI anchors structural remodeled in the ER by the GPI inositol-deacylase/PGAP1 and the metallophosphoesterase MPPE1/PGAP5. In COPI vesicle-mediated retrograde transport, involved in the biogenesis of COPI vesicles and vesicle coat recruitment. Involved in trafficking of amyloid beta A4 protein and soluble APP-beta release (independent from the modulation of gamma-secretase activity). Involved in the KDELR2-mediated retrograde transport of the toxin A subunit (CTX-A-K63)together with COPI and the COOH terminus of KDELR2. On Golgi membranes, acts as a primary receptor for ARF1-GDP, a GTP-binding protein involved in COPI-vesicle formation. Increases coatomer-dependent GTPase-activating activity of ARFGAP2 which mediates the hydrolysis of ARF1-bound GTP and therefore modulates protein trafficking from the Golgi apparatus. Involved in the exocytic trafficking of G protein-coupled receptors F2LR1/PAR2 (trypsin and tryspin-like enzyme receptor), OPRM1 (opioid receptor) and P2RY4 (UTD and UDP receptor) from the Golgi to the plasma membrane, thus contributing to receptor resensitization. In addition to its cargo receptor activity, may also act as a protein channel after oligomerization, facilitating the post-translational entry of leaderless cytoplasmic cargo into the ERGIC. Involved in the translocation into ERGIC, the vesicle entry and the secretion of leaderless cargos (lacking the secretion signal sequence), including the mature form of interleukin 1/IL-1 family members, the alpha-crystallin B chain HSPB5, the carbohydrate-binding proteins galectin-1/LGALS1 and galectin-3/LGALS3, the microtubule-associated protein Tau/MAPT, and the annexin A1/ANXA1; the translocation process is dependent on cargo protein unfolding and enhanced by chaperones HSP90AB1 and HSP90B1/GRP9. Could also associates with the presenilin-dependent gamma-secretase complex in order to regulate gamma-cleavages of the amyloid beta A4 protein to yield amyloid-beta 40/Abeta40. The chain is Transmembrane emp24 domain-containing protein 10 from Mus musculus (Mouse).